The following is a 104-amino-acid chain: L-rhamnose mutarotase (104 aa).

Tyr18 is a substrate binding site. The active-site Proton donor is His22. Substrate contacts are provided by residues Tyr41 and 76–77; that span reads WW.

The protein belongs to the rhamnose mutarotase family. Homodimer.

The protein localises to the cytoplasm. The catalysed reaction is alpha-L-rhamnose = beta-L-rhamnose. It functions in the pathway carbohydrate metabolism; L-rhamnose metabolism. Functionally, involved in the anomeric conversion of L-rhamnose. In Escherichia coli O127:H6 (strain E2348/69 / EPEC), this protein is L-rhamnose mutarotase.